Reading from the N-terminus, the 360-residue chain is C-C chemokine receptor type 4 (360 aa).

At 1–39 (MNPTDIADTTLDESIYSNYYLYESIPKPCTKEGIKAFGE) the chain is on the extracellular side. The helical transmembrane segment at 40-67 (LFLPPLYSLVFVFGLLGNSVVVLVLFKY) threads the bilayer. At 68–77 (KRLRSMTDVY) the chain is on the cytoplasmic side. The helical transmembrane segment at 78-98 (LLNLAISDLLFVFSLPFWGYY) threads the bilayer. Residues 99–111 (AADQWVFGLGLCK) are Extracellular-facing. C110 and C187 are joined by a disulfide. The helical transmembrane segment at 112–133 (MISWMYLVGFYSGIFFVMLMSI) threads the bilayer. Over 134-150 (DRYLAIVHAVFSLRART) the chain is Cytoplasmic. The helical transmembrane segment at 151 to 175 (LTYGVITSLATWSVAVFASLPGFLF) threads the bilayer. The Extracellular portion of the chain corresponds to 176–206 (STCYTERNHTYCKTKYSLNSTTWKVLSSLEI). N183 and N194 each carry an N-linked (GlcNAc...) asparagine glycan. The helical transmembrane segment at 207–226 (NILGLVIPLGIMLFCYSMII) threads the bilayer. The Cytoplasmic portion of the chain corresponds to 227 to 242 (RTLQHCKNEKKNKAVK). Residues 243–267 (MIFAVVVLFLGFWTPYNIVLFLETL) traverse the membrane as a helical segment. Residues 268–284 (VELEVLQDCTFERYLDY) are Extracellular-facing. The helical transmembrane segment at 285-308 (AIQATETLAFVHCCLNPIIYFFLG) threads the bilayer. Residues 309-360 (EKFRKYILQLFKTCRGLFVLCQYCGLLQIYSADTPSSSYTQSTMDHDLHDAL) are Cytoplasmic-facing.

The protein belongs to the G-protein coupled receptor 1 family. In terms of processing, in natural killer cells, CCL22 binding induces phosphorylation on yet undefined Ser/Thr residues, most probably by beta-adrenergic receptor kinases 1 and 2. As to expression, predominantly expressed in the thymus, in peripheral blood leukocytes, including T-cells, mostly CD4+ cells, and basophils, and in platelets; at lower levels, in the spleen and in monocytes. Detected also in macrophages, IL-2-activated natural killer cells and skin-homing memory T-cells, mostly the ones expressing the cutaneous lymphocyte antigen (CLA). Expressed in brain microvascular and coronary artery endothelial cells.

It is found in the cell membrane. High affinity receptor for the C-C type chemokines CCL17/TARC, CCL22/MDC and CKLF isoform 1/CKLF1. The activity of this receptor is mediated by G(i) proteins which activate a phosphatidylinositol-calcium second messenger system. Can function as a chemoattractant homing receptor on circulating memory lymphocytes and as a coreceptor for some primary HIV-2 isolates. In the CNS, could mediate hippocampal-neuron survival. This Homo sapiens (Human) protein is C-C chemokine receptor type 4 (CCR4).